The chain runs to 122 residues: Large ribosomal subunit protein uL14c (122 aa).

The protein belongs to the universal ribosomal protein uL14 family. Part of the 50S ribosomal subunit.

It localises to the plastid. The protein resides in the chloroplast. Functionally, binds to 23S rRNA. The polypeptide is Large ribosomal subunit protein uL14c (Huperzia lucidula (Shining clubmoss)).